The following is a 555-amino-acid chain: Urocanate hydratase (555 aa).

NAD(+)-binding positions include 51-52, Gln129, 175-177, Glu195, 262-266, 272-273, and Tyr321; these read GG, GMG, QTSAH, and YL. Cys409 is a catalytic residue. Position 491 (Gly491) interacts with NAD(+).

This sequence belongs to the urocanase family. The cofactor is NAD(+).

It is found in the cytoplasm. It carries out the reaction 4-imidazolone-5-propanoate = trans-urocanate + H2O. It participates in amino-acid degradation; L-histidine degradation into L-glutamate; N-formimidoyl-L-glutamate from L-histidine: step 2/3. Functionally, catalyzes the conversion of urocanate to 4-imidazolone-5-propionate. This chain is Urocanate hydratase, found in Xanthomonas axonopodis pv. citri (strain 306).